Consider the following 451-residue polypeptide: Tetraspanin-14 (451 aa).

Topologically, residues 1-56 (MPHRAPRRFMKTAPGACDWEQCLLMGSGEPTRARAVVSSSHKQRKPRQEISACLKW) are cytoplasmic. The short motif at 20–24 (EQCLL) is the Basolateral membrane targeting element. Residues 57–77 (LVFLLNSIVFLVGVGILALGV) form a helical membrane-spanning segment. Residues 78-96 (YLFIKDFREVKLVDIILNP) are Extracellular-facing. Residues 97-117 (AILISIFGFSICVVSFFGFMG) traverse the membrane as a helical segment. The Cytoplasmic portion of the chain corresponds to 118-130 (ALRDNIFLLKCFA). A helical membrane pass occupies residues 131-151 (ACVFLSYILVVAVTLVFFTLF). Residues 152-285 (YTDTTEGLSA…QPLRTLFESH (134 aa)) are Extracellular-facing. N-linked (GlcNAc...) asparagine glycans are attached at residues Asn205 and Asn211. The chain crosses the membrane as a helical span at residues 286–306 (AVHVGAFVALLIVPVCISVCL). Residues 307-451 (TNILAKQVDH…TDLVPQKSKS (145 aa)) are Cytoplasmic-facing. The disordered stretch occupies residues 328 to 451 (NDRRRKRDHN…TDLVPQKSKS (124 aa)). The span at 366 to 376 (PDIPPPLPPIE) shows a compositional bias: pro residues. A compositionally biased stretch (low complexity) spans 410-434 (ATTTRTPPAAAGPAPTPQATTTNRT). The segment covering 435 to 444 (HQWVLQQTDL) has biased composition (polar residues).

This sequence belongs to the tetraspanin (TM4SF) family. As to expression, expressed in the germline, particularly in sperm cells. In terms of tissue distribution, expressed in the germline (particularly in sperm cells), anterior sensory cilia, hypodermis and vulva (at protein level). Expressed in the pharynx, hypodermis and vulva (at protein level).

Its subcellular location is the cell membrane. It is found in the cytoplasmic vesicle membrane. It localises to the endosome membrane. The protein resides in the early endosome membrane. The protein localises to the late endosome membrane. Its subcellular location is the recycling endosome membrane. It is found in the apical cell membrane. It localises to the basolateral cell membrane. Its function is as follows. Functions redundantly with tsp-12 to regulate cell surface levels of the BMP type II receptor daf-4 (but not BMP type I receptor sma-6), probably by regulating endosomal sorting and recycling of receptors, preventing their targeting to degradative lysosomes. Together with tsp-12, regulates cell fate specification in the postembryonic mesodermal M lineage, body size, male development and vulva development, probably by positively modulating BMP-like Sma/Mab signaling. Together with tsp-12 involved in maintaining the structural and functional integrity of the endosomal network. Together with tsp-12, probably acts by modulating the activation of glp-1, Notch-like receptor, to regulate germline maturation. In terms of biological role, functions redundantly with tsp-12 to regulate cell fate specification in the postembryonic mesodermal M lineage, body size, embryonic and vulva development. Functions redundantly with tsp-12 to regulate cell fate specification in the postembryonic mesodermal M lineage. Likely plays a complementary role in mesodermal development with tsp-14 isoform a, but may be more critical. In Caenorhabditis elegans, this protein is Tetraspanin-14.